Here is a 129-residue protein sequence, read N- to C-terminus: Large ribosomal subunit protein uL14m (129 aa).

This sequence belongs to the universal ribosomal protein uL14 family. As to quaternary structure, component of the mitochondrial ribosome large subunit (39S) which comprises a 16S rRNA and about 50 distinct proteins.

The protein localises to the mitochondrion. This chain is Large ribosomal subunit protein uL14m (mrpl14), found in Dictyostelium discoideum (Social amoeba).